Consider the following 95-residue polypeptide: MSVDEKTVRRIAHLARIAVTDDEVGPLQGELNAILAFVEQLGTVDVAGVEPMTSVTPMAMKKREDVVTEGGRAADVVANAPETEDNYFLVPKVVE.

It belongs to the GatC family. As to quaternary structure, heterotrimer of A, B and C subunits.

The catalysed reaction is L-glutamyl-tRNA(Gln) + L-glutamine + ATP + H2O = L-glutaminyl-tRNA(Gln) + L-glutamate + ADP + phosphate + H(+). It carries out the reaction L-aspartyl-tRNA(Asn) + L-glutamine + ATP + H2O = L-asparaginyl-tRNA(Asn) + L-glutamate + ADP + phosphate + 2 H(+). Allows the formation of correctly charged Asn-tRNA(Asn) or Gln-tRNA(Gln) through the transamidation of misacylated Asp-tRNA(Asn) or Glu-tRNA(Gln) in organisms which lack either or both of asparaginyl-tRNA or glutaminyl-tRNA synthetases. The reaction takes place in the presence of glutamine and ATP through an activated phospho-Asp-tRNA(Asn) or phospho-Glu-tRNA(Gln). The sequence is that of Aspartyl/glutamyl-tRNA(Asn/Gln) amidotransferase subunit C from Methylobacterium radiotolerans (strain ATCC 27329 / DSM 1819 / JCM 2831 / NBRC 15690 / NCIMB 10815 / 0-1).